Here is a 362-residue protein sequence, read N- to C-terminus: Melatonin receptor type 1B (362 aa).

At 1 to 42 (MSENGSFANCCEAGGWAVRPGWSGAGSARPSRTPRPPWVAPA) the chain is on the extracellular side. Asn4 is a glycosylation site (N-linked (GlcNAc...) asparagine). The chain crosses the membrane as a helical span at residues 43-63 (LSAVLIVTTAVDVVGNLLVIL). Residues 64–76 (SVLRNRKLRNAGN) are Cytoplasmic-facing. A helical membrane pass occupies residues 77–97 (LFLVSLALADLVVAFYPYPLI). The Extracellular portion of the chain corresponds to 98–115 (LVAIFYDGWALGEEHCKA). An intrachain disulfide couples Cys113 to Cys190. The helical transmembrane segment at 116-136 (SAFVMGLSVIGSVFNITAIAI) threads the bilayer. At 137-155 (NRYCYICHSMAYHRIYRRW) the chain is on the cytoplasmic side. Residues 156–176 (HTPLHICLIWLLTVVALLPNF) traverse the membrane as a helical segment. Residues Asn175 and Gln194 each contribute to the melatonin site. Residues 177–200 (FVGSLEYDPRIYSCTFIQTASTQY) lie on the Extracellular side of the membrane. A helical transmembrane segment spans residues 201-221 (TAAVVVIHFLLPIAVVSFCYL). Over 222–253 (RIWVLVLQARRKAKPESRLCLKPSDLRSFLTM) the chain is Cytoplasmic. The helical transmembrane segment at 254-274 (FVVFVIFAICWAPLNCIGLAV) threads the bilayer. At 275–287 (AINPQEMAPQIPE) the chain is on the extracellular side. A helical transmembrane segment spans residues 288–308 (GLFVTSYLLAYFNSCLNAIVY). The Cytoplasmic segment spans residues 309–362 (GLLNQNFRREYKRILLALWNPRHCIQDASKGSHAEGLQSPAPPIIGVQHQADAL).

The protein belongs to the G-protein coupled receptor 1 family. As to quaternary structure, interacts with GPR61, GPR62 and GPR135. As to expression, expressed in retina and less in brain and hippocampus.

It localises to the cell membrane. In terms of biological role, high affinity receptor for melatonin. Likely to mediate the reproductive and circadian actions of melatonin. The activity of this receptor is mediated by pertussis toxin sensitive G proteins that inhibit adenylate cyclase activity. This Homo sapiens (Human) protein is Melatonin receptor type 1B (MTNR1B).